The following is a 209-amino-acid chain: Large ribosomal subunit protein uL3 (209 aa).

Residues 129–153 (SRGPMSHGSKFHRAPGSMGAASDPS) are disordered.

The protein belongs to the universal ribosomal protein uL3 family. As to quaternary structure, part of the 50S ribosomal subunit. Forms a cluster with proteins L14 and L19.

Functionally, one of the primary rRNA binding proteins, it binds directly near the 3'-end of the 23S rRNA, where it nucleates assembly of the 50S subunit. This Clostridium perfringens (strain 13 / Type A) protein is Large ribosomal subunit protein uL3.